Reading from the N-terminus, the 444-residue chain is C4-dicarboxylate transport protein (444 aa).

Transmembrane regions (helical) follow at residues 17–37, 57–77, 92–112, 139–159, 161–181, 201–221, 234–254, 320–340, and 368–388; these read PFYT…ILLG, LVKM…IAGM, LYFL…ANVV, EQSI…GAFA, GDIL…AMVG, LVAI…AFTI, MLIG…LGAV, IYMT…LSWG, and AATL…ILGI.

This sequence belongs to the dicarboxylate/amino acid:cation symporter (DAACS) (TC 2.A.23) family.

The protein resides in the cell inner membrane. Responsible for the transport of dicarboxylates such as succinate, fumarate, and malate from the periplasm across the membrane. The sequence is that of C4-dicarboxylate transport protein from Rhizobium johnstonii (strain DSM 114642 / LMG 32736 / 3841) (Rhizobium leguminosarum bv. viciae).